The sequence spans 367 residues: Heme A synthase (367 aa).

5 helical membrane-spanning segments follow: residues 26-46, 111-131, 139-159, 174-194, and 212-232; these read IRGWLAAVLFALFALVLVGGA, LLARGIGVIFALPLFFFWVTG, LPLLGILALGGFQGFIGWWMV, LATHLTIACLIFAACMWIYRG, and AGAIAIMSLFQIYLGAIVAGL. Position 274 (His274) interacts with heme. A run of 3 helical transmembrane segments spans residues 276-296, 305-325, and 327-347; these read LGAYLLFALALWHMIASLRAA, SVLLFALVTVQAAIGITTLLL, and VPIGWGVLHQGGALVVLGFAI. A heme-binding site is contributed by His335.

This sequence belongs to the COX15/CtaA family. Type 2 subfamily. As to quaternary structure, interacts with CtaB. Heme b serves as cofactor.

The protein localises to the cell membrane. It catalyses the reaction Fe(II)-heme o + 2 A + H2O = Fe(II)-heme a + 2 AH2. The protein operates within porphyrin-containing compound metabolism; heme A biosynthesis; heme A from heme O: step 1/1. In terms of biological role, catalyzes the conversion of heme O to heme A by two successive hydroxylations of the methyl group at C8. The first hydroxylation forms heme I, the second hydroxylation results in an unstable dihydroxymethyl group, which spontaneously dehydrates, resulting in the formyl group of heme A. This chain is Heme A synthase, found in Rhizobium meliloti (strain 1021) (Ensifer meliloti).